A 179-amino-acid chain; its full sequence is GTP-dependent dephospho-CoA kinase (179 aa).

GTP contacts are provided by D55, V57, D74, K76, and E128.

Belongs to the GTP-dependent DPCK family.

It carries out the reaction 3'-dephospho-CoA + GTP = GDP + CoA + H(+). It participates in cofactor biosynthesis; coenzyme A biosynthesis. In terms of biological role, catalyzes the GTP-dependent phosphorylation of the 3'-hydroxyl group of dephosphocoenzyme A to form coenzyme A (CoA). In Saccharolobus islandicus (strain M.16.27) (Sulfolobus islandicus), this protein is GTP-dependent dephospho-CoA kinase.